A 179-amino-acid polypeptide reads, in one-letter code: UPF0302 protein EF_1554 (179 aa).

It belongs to the UPF0302 family.

This is UPF0302 protein EF_1554 from Enterococcus faecalis (strain ATCC 700802 / V583).